Here is a 281-residue protein sequence, read N- to C-terminus: 40S small subunit processome assembly factor 1 (281 aa).

Residues 29–141 (LGETEGETEQ…DEDEPAKNKT (113 aa)) form a disordered region. 2 positions are modified to phosphoserine: S67 and S75. K172 bears the N6-acetyllysine mark. The tract at residues 221 to 254 (ETDIFKKKKKKGRGQEDRRSKKSAPSILSSGQVG) is disordered. S267 is subject to Phosphoserine.

As to quaternary structure, part of the small subunit (SSU) processome, composed of more than 70 proteins and the RNA chaperone small nucleolar RNA (snoRNA) U3.

It is found in the chromosome. The protein localises to the nucleus. Its subcellular location is the nucleolus. Part of the small subunit (SSU) processome, first precursor of the small eukaryotic ribosomal subunit. During the assembly of the SSU processome in the nucleolus, many ribosome biogenesis factors, an RNA chaperone and ribosomal proteins associate with the nascent pre-rRNA and work in concert to generate RNA folding, modifications, rearrangements and cleavage as well as targeted degradation of pre-ribosomal RNA by the RNA exosome. Prevents helicase DHX37 to be recruited before post-A1 state. This chain is 40S small subunit processome assembly factor 1, found in Mus musculus (Mouse).